Reading from the N-terminus, the 655-residue chain is MLHQGIILREGHVTRTIYNLIKDKRYEDVIECITSFGEAANTRAGLSTLGHCYYHAQKYEEAATCYEQLCQLAPKEAKYRFYYAQSLYQAGIFADALRVLKQMGDQEDELREQCLQLQSAILYSSEDFAGAQSLLNQRAGGTADTLNDEGCLLFQADQHEAAVQRFQAALQVGGFNPLVAYNVALAHFQKKQRAQALDYTSEIVERGMRNHPELGIGAQMDIPDGGARSVGNPITMAISGITQALNLKAAIEFQDGNEEAARDALLDLPPRAESELDPVTLHNMALTDVEGPVAGLRKLAFLLELGAPSCPKETFANILLICCKNELYETAADILAEHTDLTYKYLSQYLYELLDSLITAQTSAELAEKKLGTLASSLAGKLRSLAAKVQEVRATNEQQALRDALKDYEQALELYLPVVMARAWISWRDDDFVGAEREFHASAEFCSENSIWRLNAGHVLFMQGDKYNEAAAFYEPIVRQHSDDIMSVSAAVLANLCVSYIMTFQNEEAEELMRKVEKAEEMKGNLGKQYHHLCIVNLVVGTLYCAKSNYEFGLSRIAHALESGSGNRLYADTWLHVKHCILGLLTGMAKQNIILPYATVQEVLNFLRFCESYGLFTPANIFSATEQVPEEPLTIGLEARKLRLLLIKLSEYDNF.

7 TPR repeats span residues 10–43 (EGHVTRTIYNLIKDKRYEDVIECITSFGEAANTR), 44–76 (AGLSTLGHCYYHAQKYEEAATCYEQLCQLAPKE), 143–176 (ADTLNDEGCLLFQADQHEAAVQRFQAALQVGGFN), 178–210 (LVAYNVALAHFQKKQRAQALDYTSEIVERGMRN), 385–418 (LAAKVQEVRATNEQQALRDALKDYEQALELYLPV), 450–484 (SIWRLNAGHVLFMQGDKYNEAAAFYEPIVRQHSDD), and 534–567 (CIVNLVVGTLYCAKSNYEFGLSRIAHALESGSGN).

It belongs to the TTC30/dfy-1/fleer family.

Its subcellular location is the cell projection. It is found in the cilium. Required for polyglutamylation of axonemal tubulin in sensory cilia. Plays a role in anterograde intraflagellar transport (IFT), the process by which cilia precursors are transported from the base of the cilium to the site of their incorporation at the tip. This is Tetratricopeptide repeat protein 30 homolog from Drosophila melanogaster (Fruit fly).